The following is a 415-amino-acid chain: Multidrug resistance protein MdtA (415 aa).

A signal peptide spans 1–21; sequence MKGSYKSRWVIVIVVVIAAIA. Polar residues predominate over residues 31-46; that stretch reads DSQSAAPGATKQAQQS. Disordered regions lie at residues 31–56 and 392–415; these read DSQS…GMRA and EAQS…GARS. Basic and acidic residues predominate over residues 399–415; that stretch reads PEEKATSREYAKKGARS.

Belongs to the membrane fusion protein (MFP) (TC 8.A.1) family. As to quaternary structure, part of a tripartite efflux system composed of MdtA, MdtB and MdtC.

The protein localises to the cell inner membrane. The MdtABC tripartite complex confers resistance against novobiocin and deoxycholate. This Escherichia coli O6:K15:H31 (strain 536 / UPEC) protein is Multidrug resistance protein MdtA.